The following is a 322-amino-acid chain: Transaldolase (322 aa).

K136 acts as the Schiff-base intermediate with substrate in catalysis.

The protein belongs to the transaldolase family. Type 1 subfamily. As to quaternary structure, homodimer.

It localises to the cytoplasm. It carries out the reaction D-sedoheptulose 7-phosphate + D-glyceraldehyde 3-phosphate = D-erythrose 4-phosphate + beta-D-fructose 6-phosphate. Its pathway is carbohydrate degradation; pentose phosphate pathway; D-glyceraldehyde 3-phosphate and beta-D-fructose 6-phosphate from D-ribose 5-phosphate and D-xylulose 5-phosphate (non-oxidative stage): step 2/3. Transaldolase is important for the balance of metabolites in the pentose-phosphate pathway. The protein is Transaldolase of Xanthomonas oryzae pv. oryzae (strain KACC10331 / KXO85).